A 158-amino-acid polypeptide reads, in one-letter code: Glutathione peroxidase homolog BsaA (158 aa).

Residue Cys36 is part of the active site.

The protein belongs to the glutathione peroxidase family.

The sequence is that of Glutathione peroxidase homolog BsaA (bsaA) from Staphylococcus aureus (strain COL).